The sequence spans 60 residues: Cytochrome c oxidase subunit 9, mitochondrial (60 aa).

The Mitochondrial matrix portion of the chain corresponds to 1-15; that stretch reads MSAIAPITGTIRKRI. A helical transmembrane segment spans residues 16 to 38; the sequence is LADITIGFAIGGAMASYWWWGFH. The Mitochondrial intermembrane segment spans residues 39-57; the sequence is KNIINKREAYYAKLAEQKA. Positions 58 to 60 are cleaved as a propeptide — removed in mature form; that stretch reads AEN.

Belongs to the fungal cytochrome c oxidase subunit 7a family. Component of the cytochrome c oxidase (complex IV, CIV), a multisubunit enzyme composed of a catalytic core of 3 subunits and several supernumerary subunits. The complex exists as a monomer or a dimer and forms supercomplexes (SCs) in the inner mitochondrial membrane with ubiquinol-cytochrome c oxidoreductase (cytochrome b-c1 complex, complex III, CIII).

It is found in the mitochondrion inner membrane. Its pathway is energy metabolism; oxidative phosphorylation. In terms of biological role, component of the cytochrome c oxidase, the last enzyme in the mitochondrial electron transport chain which drives oxidative phosphorylation. The respiratory chain contains 3 multisubunit complexes succinate dehydrogenase (complex II, CII), ubiquinol-cytochrome c oxidoreductase (cytochrome b-c1 complex, complex III, CIII) and cytochrome c oxidase (complex IV, CIV), that cooperate to transfer electrons derived from NADH and succinate to molecular oxygen, creating an electrochemical gradient over the inner membrane that drives transmembrane transport and the ATP synthase. Cytochrome c oxidase is the component of the respiratory chain that catalyzes the reduction of oxygen to water. Electrons originating from reduced cytochrome c in the intermembrane space (IMS) are transferred via the dinuclear copper A center (CU(A)) of subunit 2 and heme A of subunit 1 to the active site in subunit 1, a binuclear center (BNC) formed by heme A3 and copper B (CU(B)). The BNC reduces molecular oxygen to 2 water molecules using 4 electrons from cytochrome c in the IMS and 4 protons from the mitochondrial matrix. In Kluyveromyces lactis (strain ATCC 8585 / CBS 2359 / DSM 70799 / NBRC 1267 / NRRL Y-1140 / WM37) (Yeast), this protein is Cytochrome c oxidase subunit 9, mitochondrial (COX9).